We begin with the raw amino-acid sequence, 482 residues long: Zinc metalloproteinase/disintegrin (482 aa).

An N-terminal signal peptide occupies residues 1–20 (MIQVLLVTICLAAFPYQGSS). The propeptide occupies 21–189 (MILESGNVND…IKASQLVVTA (169 aa)). The 197-residue stretch at 197 to 393 (RYIELVVVAD…HNPQCILNEP (197 aa)) folds into the Peptidase M12B domain. The Ca(2+) site is built by E200 and D284. 2 disulfide bridges follow: C308-C388 and C348-C372. Residue H333 coordinates Zn(2+). Residue E334 is part of the active site. Zn(2+)-binding residues include H337 and H343. Ca(2+) contacts are provided by C388 and N391. The propeptide occupies 394–409 (LRTDTVSTPVSGNELL). The Disintegrin domain occupies 401 to 482 (TPVSGNELLE…AGCPRNPFHA (82 aa)). 6 disulfides stabilise this stretch: C415–C430, C417–C425, C424–C447, C438–C444, C443–C468, and C456–C475. Residues 460–462 (RGD) carry the Cell attachment site motif.

The protein belongs to the venom metalloproteinase (M12B) family. P-II subfamily. P-IId sub-subfamily. As to quaternary structure, homodimer; disulfide-linked (disintegrin). Zn(2+) is required as a cofactor. In terms of tissue distribution, expressed by the venom gland.

The protein resides in the secreted. Its function is as follows. This recombinant protein hydrolyzes fibronectin, but has no effect on type I gelatin and type I to V collagens. Selectively hydrolyzes the Aalpha-chain of fibrinogen (FGA), but has no effect on fibrin. Inhibits ADP-induced platelet aggregation. Functionally, recombinant metalloproteinase-disintegrin Mt-d-I (393-408): hydrolyzes type I gelatin, type III and V collagens, but has no effect on type I, II, IV collagens and fibronectin. Selectively hydrolyzes the Aalpha-chain of fibrinogen, but has no effect on fibrin. May induce hemorrhage in vascular tissue. Strongly inhibits ADP-induced platelet aggregation. When concentrated, Mt-d-I undergoes autoproteolytic processing into metalloproteinase and disintegrin. This Gloydius brevicauda (Korean slamosa snake) protein is Zinc metalloproteinase/disintegrin.